The sequence spans 345 residues: Golgi-associated RAB2 interactor protein 1B (345 aa).

Disordered stretches follow at residues 222-241 and 271-299; these read CSPS…SQPS and SRSS…PCTR. The span at 275 to 285 shows a compositional bias: basic and acidic residues; it reads KKTENKKDSSG.

The protein belongs to the GARIN family.

It localises to the golgi apparatus. In terms of biological role, RAB2B effector protein required for accurate acrosome formation and normal male fertility. In complex with RAB2A/RAB2B, seems to suppress excessive vesicle trafficking during acrosome formation. This chain is Golgi-associated RAB2 interactor protein 1B (GARIN1B), found in Bos taurus (Bovine).